Consider the following 387-residue polypeptide: Protein RecA (387 aa).

78–85 (GPESSGKT) lines the ATP pocket. The segment covering 355–369 (KSIERDTKETKETKS) has biased composition (basic and acidic residues). The tract at residues 355-387 (KSIERDTKETKETKSKQPVSFSTEADGDIAVGE) is disordered.

This sequence belongs to the RecA family.

Its subcellular location is the cytoplasm. Can catalyze the hydrolysis of ATP in the presence of single-stranded DNA, the ATP-dependent uptake of single-stranded DNA by duplex DNA, and the ATP-dependent hybridization of homologous single-stranded DNAs. It interacts with LexA causing its activation and leading to its autocatalytic cleavage. This Leptospira biflexa serovar Patoc (strain Patoc 1 / ATCC 23582 / Paris) protein is Protein RecA.